Reading from the N-terminus, the 457-residue chain is Solute carrier family 38 member 6 (457 aa).

Met-1 is modified (N-acetylmethionine). Residues Ser-4 and Ser-7 each carry the phosphoserine modification. The next 5 membrane-spanning stretches (helical) occupy residues 48 to 68, 70 to 90, 112 to 132, 171 to 191, and 192 to 212; these read FGLSVFNVMNAIMGSGILGLA, VMANTGILGFSFLLLFVALLA, LGLFAFGLPGKVVVAGTIIIQ, LLIIICVGIVFPLSLLPKIGF, and LGYTSSLSFFFMVFFALVVVI. A disulfide bond links Cys-219 and Cys-239. 6 consecutive transmembrane segments (helical) span residues 251 to 271, 289 to 309, 328 to 348, 372 to 392, 395 to 415, and 432 to 452; these read VYAIPTMAFSFLCHTSVLPIY, AIALSFLVYFVSALFGYLTFY, VIVMAVKLCILFAVLLTAPLI, SLTTAALNAIIVVLAIYVPDI, VFGVVGASTSTCLIFVFPGLF, and ALFLLLTGAVVGSFSLVLIIF.

This sequence belongs to the amino acid/polyamine transporter 2 family. As to expression, expressed exclusively in neurons and not in astrocytes and glia cells. Highly expressed in the synapse. Highly expressed in glutamatergic neurons. Primarily expressed in excitatory neurons, with some minor expression in inhibitory neurons.

The protein resides in the cell membrane. The protein localises to the synapse. The enzyme catalyses L-glutamine(out) = L-glutamine(in). The catalysed reaction is L-glutamate(out) = L-glutamate(in). Its function is as follows. Amino acid transporter with an apparent selectivity for L-glutamine and L-glutamate. May facilitate glutamine uptake in excitatory neurons. The transport mechanism remains to be elucidated. The polypeptide is Solute carrier family 38 member 6 (Mus musculus (Mouse)).